The chain runs to 575 residues: Phosphoenolpyruvate-protein phosphotransferase (575 aa).

The active-site Tele-phosphohistidine intermediate is the H189. 2 residues coordinate phosphoenolpyruvate: R296 and R332. Residues E431 and D455 each coordinate Mg(2+). Phosphoenolpyruvate-binding positions include 454-455 (ND) and R465. The active-site Proton donor is the C502.

It belongs to the PEP-utilizing enzyme family. In terms of assembly, homodimer. Mg(2+) is required as a cofactor.

The protein localises to the cytoplasm. It catalyses the reaction L-histidyl-[protein] + phosphoenolpyruvate = N(pros)-phospho-L-histidyl-[protein] + pyruvate. Its function is as follows. General (non sugar-specific) component of the phosphoenolpyruvate-dependent sugar phosphotransferase system (sugar PTS). This major carbohydrate active-transport system catalyzes the phosphorylation of incoming sugar substrates concomitantly with their translocation across the cell membrane. Enzyme I transfers the phosphoryl group from phosphoenolpyruvate (PEP) to the phosphoryl carrier protein (HPr). This is Phosphoenolpyruvate-protein phosphotransferase (ptsI) from Haemophilus influenzae (strain ATCC 51907 / DSM 11121 / KW20 / Rd).